The chain runs to 98 residues: Ribonuclease P protein component 4 (98 aa).

Residues Cys-62, Cys-65, Cys-85, and Cys-88 each contribute to the Zn(2+) site.

The protein belongs to the eukaryotic/archaeal RNase P protein component 4 family. As to quaternary structure, consists of a catalytic RNA component and at least 4-5 protein subunits. Zn(2+) serves as cofactor.

The protein resides in the cytoplasm. The enzyme catalyses Endonucleolytic cleavage of RNA, removing 5'-extranucleotides from tRNA precursor.. Its function is as follows. Part of ribonuclease P, a protein complex that generates mature tRNA molecules by cleaving their 5'-ends. The polypeptide is Ribonuclease P protein component 4 (Thermoplasma volcanium (strain ATCC 51530 / DSM 4299 / JCM 9571 / NBRC 15438 / GSS1)).